The chain runs to 613 residues: Putative lipase atg15 (613 aa).

The Cytoplasmic portion of the chain corresponds to 1–20 (MKSHQGHQKKRRMREMGFST). Residues 21-43 (LLLGASLLLPVSVSASAPPSIYS) form a helical; Signal-anchor for type II membrane protein membrane-spanning segment. Topologically, residues 44–613 (RPYDSSPFLS…TSDHPITTPP (570 aa)) are lumenal. N-linked (GlcNAc...) asparagine glycosylation is found at Asn202, Asn224, Asn282, and Asn306. Residue Ser322 is the Charge relay system of the active site. Residue Asn468 is glycosylated (N-linked (GlcNAc...) asparagine). Residues 472-492 (HTTTTTTTTTTTTTPPSTSTS) are disordered. The span at 473–492 (TTTTTTTTTTTTTPPSTSTS) shows a compositional bias: low complexity.

Belongs to the AB hydrolase superfamily. Lipase family. As to quaternary structure, binds to both phosphatidylinositol (PI) and phosphatidylinositol 3,5-bisphosphate (PIP2).

It is found in the endosome. The protein localises to the multivesicular body membrane. It localises to the prevacuolar compartment membrane. The catalysed reaction is a triacylglycerol + H2O = a diacylglycerol + a fatty acid + H(+). Functionally, lipase which is essential for lysis of subvacuolar cytoplasm to vacuole targeted bodies and intravacuolar autophagic bodies. Involved in the lysis of intravacuolar multivesicular body (MVB) vesicles. The intravacuolar membrane disintegration by atg15 is critical to life span extension. The protein is Putative lipase atg15 (atg15) of Aspergillus terreus (strain NIH 2624 / FGSC A1156).